The following is a 420-amino-acid chain: RING finger protein 39 (420 aa).

Residues 88-135 (CPLCGGSFEDPVLLACEHSFCRACLARRWGTPPATGTEASPTACPCCG) form an RING-type zinc finger. Residues 210 to 420 (DDLPEDYPVV…APLRIVPAES (211 aa)) enclose the B30.2/SPRY domain.

As to expression, expressed in testis.

It is found in the cytoplasm. The catalysed reaction is S-ubiquitinyl-[E2 ubiquitin-conjugating enzyme]-L-cysteine + [acceptor protein]-L-lysine = [E2 ubiquitin-conjugating enzyme]-L-cysteine + N(6)-ubiquitinyl-[acceptor protein]-L-lysine.. It participates in protein modification; protein ubiquitination. Functionally, plays an inhibitory role in anti-RNA viral innate immunity by targeting the adapter DDX3X and promoting its 'Lys-48'-linked polyubiquitination. Alternatively, enhances the cGAS-STING pathway activation by promoting 'Lys-63'-linked ubiquitination of STING1, facilitating the STING1-TBK1 complex formation and STING1 activation. (Microbial infection) Plays a positive role in human immunodeficiency virus (HIV-1) replication. The protein is RING finger protein 39 (RNF39) of Homo sapiens (Human).